Reading from the N-terminus, the 233-residue chain is Uridylate kinase (233 aa).

Residues 8–11, G51, and R55 each bind ATP; that span reads KLSG. Residues D68 and 129–136 each bind UMP; that span reads TSNPFFTT. T156, Y162, and D165 together coordinate ATP.

This sequence belongs to the UMP kinase family. Homohexamer.

It localises to the cytoplasm. It carries out the reaction UMP + ATP = UDP + ADP. It functions in the pathway pyrimidine metabolism; CTP biosynthesis via de novo pathway; UDP from UMP (UMPK route): step 1/1. With respect to regulation, inhibited by UTP. In terms of biological role, catalyzes the reversible phosphorylation of UMP to UDP. The sequence is that of Uridylate kinase from Pseudothermotoga lettingae (strain ATCC BAA-301 / DSM 14385 / NBRC 107922 / TMO) (Thermotoga lettingae).